A 272-amino-acid polypeptide reads, in one-letter code: Putative phosphoenolpyruvate synthase regulatory protein (272 aa).

Residue 152–159 coordinates ADP; it reads GVSRCGKT.

It belongs to the pyruvate, phosphate/water dikinase regulatory protein family. PSRP subfamily.

The enzyme catalyses [pyruvate, water dikinase] + ADP = [pyruvate, water dikinase]-phosphate + AMP + H(+). It carries out the reaction [pyruvate, water dikinase]-phosphate + phosphate + H(+) = [pyruvate, water dikinase] + diphosphate. Bifunctional serine/threonine kinase and phosphorylase involved in the regulation of the phosphoenolpyruvate synthase (PEPS) by catalyzing its phosphorylation/dephosphorylation. The chain is Putative phosphoenolpyruvate synthase regulatory protein from Pseudomonas putida (strain ATCC 700007 / DSM 6899 / JCM 31910 / BCRC 17059 / LMG 24140 / F1).